Consider the following 293-residue polypeptide: Triosephosphate isomerase (293 aa).

Residue 25–27 (NWK) coordinates substrate. The Electrophile role is filled by His117. Glu218 functions as the Proton acceptor in the catalytic mechanism.

Belongs to the triosephosphate isomerase family. In terms of assembly, homodimer.

It is found in the cytoplasm. It catalyses the reaction D-glyceraldehyde 3-phosphate = dihydroxyacetone phosphate. The protein operates within carbohydrate biosynthesis; gluconeogenesis. It functions in the pathway carbohydrate degradation; glycolysis; D-glyceraldehyde 3-phosphate from glycerone phosphate: step 1/1. In terms of biological role, involved in the gluconeogenesis. Catalyzes stereospecifically the conversion of dihydroxyacetone phosphate (DHAP) to D-glyceraldehyde-3-phosphate (G3P). The sequence is that of Triosephosphate isomerase from Tropheryma whipplei (strain Twist) (Whipple's bacillus).